Here is a 325-residue protein sequence, read N- to C-terminus: Glycine--tRNA ligase alpha subunit (325 aa).

It belongs to the class-II aminoacyl-tRNA synthetase family. As to quaternary structure, tetramer of two alpha and two beta subunits.

It is found in the cytoplasm. The catalysed reaction is tRNA(Gly) + glycine + ATP = glycyl-tRNA(Gly) + AMP + diphosphate. This Ralstonia nicotianae (strain ATCC BAA-1114 / GMI1000) (Ralstonia solanacearum) protein is Glycine--tRNA ligase alpha subunit.